The sequence spans 389 residues: E3 ubiquitin-protein ligase E3D (389 aa).

Residue Ala2 is modified to N-acetylalanine. The BRAT1-like motif motif lies at 129–159; that stretch reads PLPSENWGALVGEWCCHPDPFANKPLHPQEN. Residue Cys144 coordinates Zn(2+). Residues 235–257 are interaction with UBE2C; the sequence is QSSERSFPIIPRPRFVQSVIAQC. Residues 353 to 389 are HECT-like; sequence LPSATCLELLLILSKSNANLPSSLRHMNSFQVAFLKI.

Interacts with UBE2C/UbcH10 (E2 ubiquitin-conjugating enzyme). In vitro, interacts with cyclin-B. Ubiquitinated by UBCH10 (E2 ubiquitin-conjugating enzyme).

The protein localises to the cytoplasm. It carries out the reaction S-ubiquitinyl-[E2 ubiquitin-conjugating enzyme]-L-cysteine + [acceptor protein]-L-lysine = [E2 ubiquitin-conjugating enzyme]-L-cysteine + N(6)-ubiquitinyl-[acceptor protein]-L-lysine.. It participates in protein modification; protein ubiquitination. Its function is as follows. E3 ubiquitin-protein ligase which accepts ubiquitin from specific E2 ubiquitin-conjugating enzymes, and transfers it to substrates, generally promoting their degradation by the proteasome. Independently of its E3 ubiquitin-protein ligase activity, acts as an inhibitor of CPSF3 endonuclease activity by blocking CPSF3 active site. This is E3 ubiquitin-protein ligase E3D (UBE3D) from Pongo abelii (Sumatran orangutan).